Here is a 421-residue protein sequence, read N- to C-terminus: UDP-N-acetylglucosamine 1-carboxyvinyltransferase 2 (421 aa).

22–23 (KN) lines the phosphoenolpyruvate pocket. Residue Arg-95 participates in UDP-N-acetyl-alpha-D-glucosamine binding. The active-site Proton donor is the Cys-119. Position 119 is a 2-(S-cysteinyl)pyruvic acid O-phosphothioketal (Cys-119). Residues 124-128 (RPIEQ), Asp-308, and Val-330 contribute to the UDP-N-acetyl-alpha-D-glucosamine site.

It belongs to the EPSP synthase family. MurA subfamily.

It is found in the cytoplasm. It carries out the reaction phosphoenolpyruvate + UDP-N-acetyl-alpha-D-glucosamine = UDP-N-acetyl-3-O-(1-carboxyvinyl)-alpha-D-glucosamine + phosphate. It functions in the pathway cell wall biogenesis; peptidoglycan biosynthesis. Its function is as follows. Cell wall formation. Adds enolpyruvyl to UDP-N-acetylglucosamine. The sequence is that of UDP-N-acetylglucosamine 1-carboxyvinyltransferase 2 from Staphylococcus haemolyticus (strain JCSC1435).